The primary structure comprises 302 residues: Phosphatidylglycerol--prolipoprotein diacylglyceryl transferase (302 aa).

3 helical membrane-spanning segments follow: residues 26–46 (WYAL…VMLV), 67–87 (LVLW…VLFY), and 108–128 (IWEG…AIVL). An a 1,2-diacyl-sn-glycero-3-phospho-(1'-sn-glycerol)-binding site is contributed by R156. 2 consecutive transmembrane segments (helical) span residues 231–251 (GALV…LEGV) and 263–283 (LGLT…VWLL).

This sequence belongs to the Lgt family.

The protein localises to the cell inner membrane. The catalysed reaction is L-cysteinyl-[prolipoprotein] + a 1,2-diacyl-sn-glycero-3-phospho-(1'-sn-glycerol) = an S-1,2-diacyl-sn-glyceryl-L-cysteinyl-[prolipoprotein] + sn-glycerol 1-phosphate + H(+). It functions in the pathway protein modification; lipoprotein biosynthesis (diacylglyceryl transfer). Its function is as follows. Catalyzes the transfer of the diacylglyceryl group from phosphatidylglycerol to the sulfhydryl group of the N-terminal cysteine of a prolipoprotein, the first step in the formation of mature lipoproteins. The sequence is that of Phosphatidylglycerol--prolipoprotein diacylglyceryl transferase from Caulobacter sp. (strain K31).